A 491-amino-acid chain; its full sequence is Histamine H1 receptor (491 aa).

Residues 1–30 (MTCPNSSCVFEDKMCQGNKTAPANDAQLTP) lie on the Extracellular side of the membrane. N-linked (GlcNAc...) asparagine glycosylation is found at asparagine 5 and asparagine 18. A helical transmembrane segment spans residues 31–51 (LVVVLSTISLVTVGLNLLVLY). At 52-65 (AVRSERKLHTVGNL) the chain is on the cytoplasmic side. The chain crosses the membrane as a helical span at residues 66–90 (YIVSLSVADLIVGVVVMPMNILYLL). Residues 91–98 (MSRWSLGR) lie on the Extracellular side of the membrane. Residues 99 to 124 (PLCLFWLSMDYVASTASIFSVFILCI) form a helical membrane-spanning segment. The cysteines at positions 101 and 181 are disulfide-linked. 2 residues coordinate histamine: aspartate 108 and threonine 113. Residues 108 to 113 (DYVAST) form an important for agonist binding region. Topologically, residues 125–145 (DRYRSVQQPLKYLRYRTKTRA) are cytoplasmic. Phosphothreonine is present on residues threonine 141 and threonine 143. A helical membrane pass occupies residues 146 to 165 (SITILAAWFLSFLWIIPILG). At 166–189 (WRHFQPKTPEPREDKCETDFYNVT) the chain is on the extracellular side. A helical membrane pass occupies residues 190–212 (WFKVMTAIINFYLPTLLMLWFYA). Asparagine 199 provides a ligand contact to histamine. Topologically, residues 213–420 (KIYKAVRQHC…MNRERKAAKQ (208 aa)) are cytoplasmic. Serine 231 is modified (phosphoserine). 2 disordered regions span residues 246–297 (QVGA…KEEK) and 360–385 (QSFS…SESS). Basic and acidic residues predominate over residues 252-262 (PGKESPWEVLK). Serine 384, serine 400, and serine 402 each carry phosphoserine. A helical membrane pass occupies residues 421 to 444 (LGFIMAAFIICWIPYFIFFMVIAF). Residues 428-432 (FIICW) form an important for agonist binding region. Residue tyrosine 435 participates in histamine binding. Cysteine 445 and cysteine 448 form a disulfide bridge. Residues 445-450 (CESCCN) are Extracellular-facing. The chain crosses the membrane as a helical span at residues 451–473 (QHVHMFTIWLGYINSTLNPLIYP). Over 474-491 (LCNENFKKTFKKILHIRS) the chain is Cytoplasmic.

It belongs to the G-protein coupled receptor 1 family. In terms of processing, phosphorylation at sites in the second and third cytoplasmic loops independently contribute to agonist-induced receptor down-regulation. In terms of tissue distribution, brain, lung, small intestine, uterus, adrenal medulla and spleen.

The protein resides in the cell membrane. Functionally, G-protein-coupled receptor for histamine, a biogenic amine that functions as an immune modulator and a neurotransmitter. Through the H1 receptor, histamine mediates the contraction of smooth muscles and increases capillary permeability due to contraction of terminal venules. Also mediates neurotransmission in the central nervous system and thereby regulates circadian rhythms, emotional and locomotor activities as well as cognitive functions. This is Histamine H1 receptor from Bos taurus (Bovine).